The primary structure comprises 642 residues: Rhotekin-2 (642 aa).

In terms of domain architecture, REM-1 spans 30-105 (IKRKKIRESM…AQKRTGHQDF (76 aa)). Residues 306–413 (LDMMSGFLSQ…WLDSLWQHIY (108 aa)) form the PH domain. Disordered regions lie at residues 505–563 (TVLS…GRPS) and 575–642 (LQKS…PKAW). Basic and acidic residues-rich tracts occupy residues 597-615 (PEKR…KEYI) and 632-642 (SFREKMNPKAW).

The protein is Rhotekin-2 (rtkn2) of Danio rerio (Zebrafish).